Here is a 126-residue protein sequence, read N- to C-terminus: Small ribosomal subunit protein uS13 (126 aa).

The disordered stretch occupies residues 91–126 (HRAGLPVRGQRTRTNSRTRRSAKRTVAGKKKAPSKK). The span at 100 to 126 (QRTRTNSRTRRSAKRTVAGKKKAPSKK) shows a compositional bias: basic residues.

This sequence belongs to the universal ribosomal protein uS13 family. In terms of assembly, part of the 30S ribosomal subunit. Forms a loose heterodimer with protein S19. Forms two bridges to the 50S subunit in the 70S ribosome.

In terms of biological role, located at the top of the head of the 30S subunit, it contacts several helices of the 16S rRNA. In the 70S ribosome it contacts the 23S rRNA (bridge B1a) and protein L5 of the 50S subunit (bridge B1b), connecting the 2 subunits; these bridges are implicated in subunit movement. Contacts the tRNAs in the A and P-sites. The protein is Small ribosomal subunit protein uS13 of Acaryochloris marina (strain MBIC 11017).